A 387-amino-acid chain; its full sequence is Alanine racemase (387 aa).

The active-site Proton acceptor; specific for D-alanine is Lys48. Lys48 is subject to N6-(pyridoxal phosphate)lysine. Arg146 is a binding site for substrate. The active-site Proton acceptor; specific for L-alanine is the Tyr267. Met315 is a binding site for substrate.

This sequence belongs to the alanine racemase family. Pyridoxal 5'-phosphate serves as cofactor.

The enzyme catalyses L-alanine = D-alanine. It participates in amino-acid biosynthesis; D-alanine biosynthesis; D-alanine from L-alanine: step 1/1. Functionally, catalyzes the interconversion of L-alanine and D-alanine. May also act on other amino acids. This is Alanine racemase (alr) from Methylacidiphilum infernorum (isolate V4) (Methylokorus infernorum (strain V4)).